Here is a 105-residue protein sequence, read N- to C-terminus: Protein ORFg in retron Ec67 (105 aa).

This is Protein ORFg in retron Ec67 from Escherichia coli.